The primary structure comprises 220 residues: Grancalcin (220 aa).

EF-hand domains are found at residues 51–86, 92–127, 122–157, and 158–193; these read SPAD…SGIS, FSLE…LNAW, AALN…MGYR, and LSPQ…ALTD. 10 residues coordinate Ca(2+): D105, D107, T109, K111, E116, D135, D137, S139, T141, and E146.

As to quaternary structure, homodimer. Interacts with SRI and LCP1.

The protein resides in the cytoplasm. It is found in the cytoplasmic granule membrane. Functionally, calcium-binding protein that may play a role in the adhesion of neutrophils to fibronectin. May play a role in the formation of focal adhesions. In Mus musculus (Mouse), this protein is Grancalcin (Gca).